The following is a 704-amino-acid chain: SH3KBP1-binding protein 1 (704 aa).

Alanine 2 bears the N-acetylalanine mark. The 70-residue stretch at 19–88 (EVIHLNVGGK…LRTKELDPRG (70 aa)) folds into the BTB domain. The interval 145–165 (LVGPQQAGGRPAPVRRSNTMP) is disordered. Threonine 163 carries the post-translational modification Phosphothreonine. WD repeat units lie at residues 233–280 (RLDW…GGSE), 283–322 (VFHL…WQVQ), 324–359 (VQPI…LRMK), 428–466 (VHRS…GMIS), and 548–586 (LECE…DGLG). Low complexity predominate over residues 611–644 (ASSRGSLPSPSPRTSLTSLHSAFSNTSLSSRRGS). The tract at residues 611–704 (ASSRGSLPSP…PKTKLNETSF (94 aa)) is disordered. A PXXXPR motif is present at residues 618-623 (PSPSPR). Residues serine 644 and serine 646 each carry the phosphoserine modification. The short motif at 678–683 (PTPAPR) is the PXXXPR element.

It belongs to the KCTD3 family. Monomer. Interacts with CUL3; interaction is direct and forms a 5:5 heterodecamer. Interacts (via PXXXPR motifs) with SH3KBP1 (via SH3 domains). Directly interacts with cathepsin B/CTSB.

The protein resides in the lysosome. Inhibits CBL-SH3KBP1 complex mediated down-regulation of EGFR signaling by sequestration of SH3KBP1. Binds to SH3KBP1 and prevents its interaction with CBL and inhibits translocation of SH3KBP1 to EGFR containing vesicles upon EGF stimulation. This is SH3KBP1-binding protein 1 (SHKBP1) from Bos taurus (Bovine).